We begin with the raw amino-acid sequence, 283 residues long: 4-hydroxy-3-methylbut-2-enyl diphosphate reductase (283 aa).

Cysteine 12 lines the [4Fe-4S] cluster pocket. (2E)-4-hydroxy-3-methylbut-2-enyl diphosphate contacts are provided by histidine 40 and histidine 72. 2 residues coordinate dimethylallyl diphosphate: histidine 40 and histidine 72. Residues histidine 40 and histidine 72 each coordinate isopentenyl diphosphate. Cysteine 94 is a binding site for [4Fe-4S] cluster. Position 122 (histidine 122) interacts with (2E)-4-hydroxy-3-methylbut-2-enyl diphosphate. Dimethylallyl diphosphate is bound at residue histidine 122. Residue histidine 122 participates in isopentenyl diphosphate binding. Glutamate 124 acts as the Proton donor in catalysis. Threonine 160 is a binding site for (2E)-4-hydroxy-3-methylbut-2-enyl diphosphate. Cysteine 188 serves as a coordination point for [4Fe-4S] cluster. 3 residues coordinate (2E)-4-hydroxy-3-methylbut-2-enyl diphosphate: serine 216, asparagine 218, and serine 259. Residues serine 216, asparagine 218, and serine 259 each contribute to the dimethylallyl diphosphate site. Residues serine 216, asparagine 218, and serine 259 each coordinate isopentenyl diphosphate.

Belongs to the IspH family. The cofactor is [4Fe-4S] cluster.

It carries out the reaction isopentenyl diphosphate + 2 oxidized [2Fe-2S]-[ferredoxin] + H2O = (2E)-4-hydroxy-3-methylbut-2-enyl diphosphate + 2 reduced [2Fe-2S]-[ferredoxin] + 2 H(+). The enzyme catalyses dimethylallyl diphosphate + 2 oxidized [2Fe-2S]-[ferredoxin] + H2O = (2E)-4-hydroxy-3-methylbut-2-enyl diphosphate + 2 reduced [2Fe-2S]-[ferredoxin] + 2 H(+). Its pathway is isoprenoid biosynthesis; dimethylallyl diphosphate biosynthesis; dimethylallyl diphosphate from (2E)-4-hydroxy-3-methylbutenyl diphosphate: step 1/1. The protein operates within isoprenoid biosynthesis; isopentenyl diphosphate biosynthesis via DXP pathway; isopentenyl diphosphate from 1-deoxy-D-xylulose 5-phosphate: step 6/6. Functionally, catalyzes the conversion of 1-hydroxy-2-methyl-2-(E)-butenyl 4-diphosphate (HMBPP) into a mixture of isopentenyl diphosphate (IPP) and dimethylallyl diphosphate (DMAPP). Acts in the terminal step of the DOXP/MEP pathway for isoprenoid precursor biosynthesis. The polypeptide is 4-hydroxy-3-methylbut-2-enyl diphosphate reductase (Dictyoglomus turgidum (strain DSM 6724 / Z-1310)).